Consider the following 231-residue polypeptide: ATP synthase subunit a (231 aa).

Helical transmembrane passes span 14–34 (GFLK…VLAV), 78–98 (YLGF…CTVI), 107–127 (SLST…FFGI), 174–194 (MIIG…MTAL), and 196–216 (LLTG…YIAA).

This sequence belongs to the ATPase A chain family. As to quaternary structure, F-type ATPases have 2 components, CF(1) - the catalytic core - and CF(0) - the membrane proton channel. CF(1) has five subunits: alpha(3), beta(3), gamma(1), delta(1), epsilon(1). CF(0) has three main subunits: a(1), b(2) and c(9-12). The alpha and beta chains form an alternating ring which encloses part of the gamma chain. CF(1) is attached to CF(0) by a central stalk formed by the gamma and epsilon chains, while a peripheral stalk is formed by the delta and b chains.

The protein resides in the cell inner membrane. Key component of the proton channel; it plays a direct role in the translocation of protons across the membrane. The chain is ATP synthase subunit a from Albidiferax ferrireducens (strain ATCC BAA-621 / DSM 15236 / T118) (Rhodoferax ferrireducens).